Here is a 238-residue protein sequence, read N- to C-terminus: MTKKITLVSTPIGNLKDISLRALDTLRDSDIILCEDTRVSQKLLNHYQINNKKLISYHKFNEYKMLDLIDNYLNQGLQICLISDAGVPTISDPGQILVNWAHENDIEVDIIPGANALISAFALSGYKGSFYFGGFLDSKKQQIIKQISLLDPKVSYIFYISPFKLVYTLEIIRDLYGEEIDIFLIKEITKIYQKYYRGTPDKILNNLSAPKGEFTIILKLKEKKSIKKNKYEQFSKVK.

This sequence belongs to the methyltransferase superfamily. RsmI family.

The protein localises to the cytoplasm. The enzyme catalyses cytidine(1402) in 16S rRNA + S-adenosyl-L-methionine = 2'-O-methylcytidine(1402) in 16S rRNA + S-adenosyl-L-homocysteine + H(+). Functionally, catalyzes the 2'-O-methylation of the ribose of cytidine 1402 (C1402) in 16S rRNA. The sequence is that of Ribosomal RNA small subunit methyltransferase I from Mesomycoplasma conjunctivae (strain ATCC 25834 / NCTC 10147 / HRC/581) (Mycoplasma conjunctivae).